Reading from the N-terminus, the 366-residue chain is Quinolinate synthase (366 aa).

The iminosuccinate site is built by His44 and Ser61. Cys108 contacts [4Fe-4S] cluster. Residues 139–141 (YIN) and Ser160 contribute to the iminosuccinate site. Residue Cys228 participates in [4Fe-4S] cluster binding. Iminosuccinate contacts are provided by residues 254–256 (HPE) and Thr271. Cys318 contributes to the [4Fe-4S] cluster binding site.

This sequence belongs to the quinolinate synthase family. Type 3 subfamily. [4Fe-4S] cluster serves as cofactor.

It is found in the cytoplasm. The enzyme catalyses iminosuccinate + dihydroxyacetone phosphate = quinolinate + phosphate + 2 H2O + H(+). The protein operates within cofactor biosynthesis; NAD(+) biosynthesis; quinolinate from iminoaspartate: step 1/1. In terms of biological role, catalyzes the condensation of iminoaspartate with dihydroxyacetone phosphate to form quinolinate. The sequence is that of Quinolinate synthase from Listeria monocytogenes serovar 1/2a (strain ATCC BAA-679 / EGD-e).